Reading from the N-terminus, the 201-residue chain is Mitochondrial inner membrane protease ATP23 homolog (201 aa).

A compositionally biased stretch (gly residues) spans 1–10 (MAGAPGGGEL). The tract at residues 1–40 (MAGAPGGGELGPAAGEPLLQRPDSGQGSPEPPAHGKPQQG) is disordered. His-125 contributes to the a divalent metal cation binding site. Residue Glu-126 is part of the active site. Position 129 (His-129) interacts with a divalent metal cation.

This sequence belongs to the peptidase M76 family. In terms of assembly, interacts with XRCC6.

In Mus musculus (Mouse), this protein is Mitochondrial inner membrane protease ATP23 homolog (Atp23).